A 247-amino-acid polypeptide reads, in one-letter code: NCT transcriptional regulatory complex subunit A (247 aa).

A compositionally biased stretch (basic and acidic residues) spans 1–12 (MTDQDSTYRPRS). 3 disordered regions span residues 1 to 31 (MTDQDSTYRPRSPDLSTFQSSIPPAVNSPIY), 48 to 82 (FFAPQYQQPPAPLGRVPQQYIPPFVDPNSPLSPDM), and 212 to 247 (VPDQPAGGRKHDDDGSDQNEQPKRKRGGRRPKDDSD). Positions 13-22 (PDLSTFQSSI) are enriched in polar residues.

Belongs to the NC2 alpha/DRAP1 family. As to quaternary structure, forms the NCT transcriptional regulatory complex with nctB and mot1.

Its subcellular location is the nucleus. Part of the NCT transcriptional regulatory complex that acts as a key regulator of ergosterol biosynthesis and the azole exporter cdr1B. The NCT complex binds the promoters of genes linked to azole susceptibility, and especially represses the expression of cdr1B transporter. The protein is NCT transcriptional regulatory complex subunit A of Aspergillus fumigatus (strain CBS 144.89 / FGSC A1163 / CEA10) (Neosartorya fumigata).